A 1018-amino-acid chain; its full sequence is Probable inorganic carbon transporter subunit DabA 2 (1018 aa).

The Zn(2+) site is built by C489, D491, H674, and C689.

The protein belongs to the inorganic carbon transporter (TC 9.A.2) DabA family. Forms a complex with DabB. Zn(2+) is required as a cofactor.

It is found in the cell inner membrane. Part of an energy-coupled inorganic carbon pump. The sequence is that of Probable inorganic carbon transporter subunit DabA 2 from Sorangium cellulosum (strain So ce56) (Polyangium cellulosum (strain So ce56)).